A 257-amino-acid polypeptide reads, in one-letter code: Pyridoxine 5'-phosphate synthase (257 aa).

3-amino-2-oxopropyl phosphate is bound at residue Asn6. 8–9 contacts 1-deoxy-D-xylulose 5-phosphate; the sequence is DH. Residue Arg17 participates in 3-amino-2-oxopropyl phosphate binding. His41 serves as the catalytic Proton acceptor. 1-deoxy-D-xylulose 5-phosphate-binding residues include Arg43 and His48. The active-site Proton acceptor is the Glu68. Thr98 provides a ligand contact to 1-deoxy-D-xylulose 5-phosphate. His210 acts as the Proton donor in catalysis. Residues Gly211 and 232–233 each bind 3-amino-2-oxopropyl phosphate; that span reads GQ.

It belongs to the PNP synthase family. In terms of assembly, homooctamer; tetramer of dimers.

The protein resides in the cytoplasm. It catalyses the reaction 3-amino-2-oxopropyl phosphate + 1-deoxy-D-xylulose 5-phosphate = pyridoxine 5'-phosphate + phosphate + 2 H2O + H(+). It participates in cofactor biosynthesis; pyridoxine 5'-phosphate biosynthesis; pyridoxine 5'-phosphate from D-erythrose 4-phosphate: step 5/5. Its function is as follows. Catalyzes the complicated ring closure reaction between the two acyclic compounds 1-deoxy-D-xylulose-5-phosphate (DXP) and 3-amino-2-oxopropyl phosphate (1-amino-acetone-3-phosphate or AAP) to form pyridoxine 5'-phosphate (PNP) and inorganic phosphate. The chain is Pyridoxine 5'-phosphate synthase from Campylobacter jejuni subsp. jejuni serotype O:6 (strain 81116 / NCTC 11828).